We begin with the raw amino-acid sequence, 933 residues long: Neuronal PAS domain-containing protein 4A (933 aa).

Residues 1 to 13 (MYRSTKGASKARR) form a basic motif; degenerate region. Positions 1 to 53 (MYRSTKGASKARRDQINAEIRNLKDLLPISDADKSRLSYLHIMSLACMYTRKS) constitute a bHLH domain. The segment at 14 to 53 (DQINAEIRNLKDLLPISDADKSRLSYLHIMSLACMYTRKS) is helix-loop-helix motif. PAS domains follow at residues 74–148 (SFYE…PDTD) and 220–290 (TSAS…LREG). The region spanning 295–334 (AEMVVRVETADHSWVWLYMVLQLETGETPIVSNNYIISET) is the PAC domain. Polar residues predominate over residues 361-398 (QESVSLQSPETLSSPDQVFTPGSSGLSGQSFDFSTAAC). Disordered stretches follow at residues 361–451 (QESV…ASSP), 514–573 (GSNF…LSSL), and 750–776 (DLSS…PSTP). 4 stretches are compositionally biased toward low complexity: residues 399–411 (STGS…GSSS), 440–451 (EPMASPSSASSP), 538–560 (GQTA…SNPQ), and 751–769 (LSSS…HSSP).

As to quaternary structure, efficient DNA binding requires dimerization with another bHLH protein. Brain-specific.

It localises to the nucleus. In terms of biological role, transcription factor expressed in neurons of the brain that regulates the excitatory-inhibitory balance within neural circuits and is required for contextual memory in the hippocampus. Plays a key role in the structural and functional plasticity of neurons. Acts as an early-response transcription factor in both excitatory and inhibitory neurons, where it induces distinct but overlapping sets of late-response genes in these two types of neurons, allowing the synapses that form on inhibitory and excitatory neurons to be modified by neuronal activity in a manner specific to their function within a circuit, thereby facilitating appropriate circuit responses to sensory experience. In Danio rerio (Zebrafish), this protein is Neuronal PAS domain-containing protein 4A (npas4a).